The sequence spans 512 residues: 2'-5'-oligoadenylate synthase-like protein 1 (512 aa).

2 consecutive Ubiquitin-like domains span residues 351 to 430 (IQVT…ISPE) and 431 to 507 (IQVF…EGKA).

The protein belongs to the 2-5A synthase family. As to quaternary structure, specifically interacts with the ligand binding domain of the thyroid receptor (TR). TRIP14 does not require the presence of thyroid hormone for its interaction. Binds MBD1.

The protein resides in the nucleus. Its subcellular location is the nucleolus. It localises to the cytoplasm. In terms of biological role, does not have 2'-5'-OAS activity, but can bind double-stranded RNA. Displays antiviral activity via an alternative antiviral pathway independent of RNase L. The chain is 2'-5'-oligoadenylate synthase-like protein 1 (Oasl) from Rattus norvegicus (Rat).